A 326-amino-acid chain; its full sequence is MKFTSVLAFFLATLTASATPLYKRQNVTSGGGTVPVIITGGPAVSGSQSNVTTTTLFNSTSTLNITQLYQIATQVNQTLQSESSSGIIIVTNWRSIETLSFFCSIVFNTSKTIVITENFLWGVPILSSSDAEGRGTLVAGRDKVVYSGVFPPYTVPVGVLSGQKNVQWFFDACEPTLIASNSTIRTQYSNFTSAQISSNASSGTNTSSSSSSPLVPIIYEEGYSQSLIQSLSSSIQGLVVVSSGTSHNSTVASWTSVDFPVVYASDGSSGHDGSGIGFISNTSIPQGAISAGYLSPIQAQTLLSIAIHNQVTSSSELQQIFPVSQQ.

Residues 1-18 form the signal peptide; that stretch reads MKFTSVLAFFLATLTASA. The 306-residue stretch at 19–324 folds into the Asparaginase/glutaminase domain; it reads TPLYKRQNVT…SELQQIFPVS (306 aa). N-linked (GlcNAc...) asparagine glycosylation is found at Asn26, Asn50, Asn58, Asn64, Asn76, Asn108, Asn181, Asn190, Asn199, Asn205, Asn248, and Asn281.

This sequence to yeast YGP1.

Its function is as follows. Serves a protective function during the early stages of spore wall formation, and contributes to spore wall maturation. This is Sporulation-specific wall maturation protein (SPS100) from Saccharomyces cerevisiae (strain ATCC 204508 / S288c) (Baker's yeast).